The sequence spans 162 residues: 2-C-methyl-D-erythritol 2,4-cyclodiphosphate synthase (162 aa).

A divalent metal cation is bound by residues Asp-12 and His-14. 4-CDP-2-C-methyl-D-erythritol 2-phosphate contacts are provided by residues 12-14 and 38-39; these read DVH and HS. His-46 is a binding site for a divalent metal cation. Residues 60–62, 136–139, Phe-143, and Arg-146 contribute to the 4-CDP-2-C-methyl-D-erythritol 2-phosphate site; these read DIG and TTTE.

It belongs to the IspF family. In terms of assembly, homotrimer. It depends on a divalent metal cation as a cofactor.

The catalysed reaction is 4-CDP-2-C-methyl-D-erythritol 2-phosphate = 2-C-methyl-D-erythritol 2,4-cyclic diphosphate + CMP. It participates in isoprenoid biosynthesis; isopentenyl diphosphate biosynthesis via DXP pathway; isopentenyl diphosphate from 1-deoxy-D-xylulose 5-phosphate: step 4/6. In terms of biological role, involved in the biosynthesis of isopentenyl diphosphate (IPP) and dimethylallyl diphosphate (DMAPP), two major building blocks of isoprenoid compounds. Catalyzes the conversion of 4-diphosphocytidyl-2-C-methyl-D-erythritol 2-phosphate (CDP-ME2P) to 2-C-methyl-D-erythritol 2,4-cyclodiphosphate (ME-CPP) with a corresponding release of cytidine 5-monophosphate (CMP). The chain is 2-C-methyl-D-erythritol 2,4-cyclodiphosphate synthase from Porphyromonas gingivalis (strain ATCC BAA-308 / W83).